A 776-amino-acid chain; its full sequence is Homoaconitase, mitochondrial (776 aa).

The N-terminal 24 residues, 1–24, are a transit peptide targeting the mitochondrion; it reads MVALRRAVALNAVAIARLQTRALT. The [4Fe-4S] cluster site is built by cysteine 392, cysteine 459, and cysteine 462.

It belongs to the aconitase/IPM isomerase family. [4Fe-4S] cluster serves as cofactor.

The protein resides in the mitochondrion. It carries out the reaction (2R,3S)-homoisocitrate = cis-homoaconitate + H2O. The protein operates within amino-acid biosynthesis; L-lysine biosynthesis via AAA pathway; L-alpha-aminoadipate from 2-oxoglutarate: step 3/5. Its function is as follows. Catalyzes the reversible hydration of cis-homoaconitate to (2R,3S)-homoisocitrate, a step in the alpha-aminoadipate pathway for lysine biosynthesis. The chain is Homoaconitase, mitochondrial (LYS4) from Gibberella zeae (strain ATCC MYA-4620 / CBS 123657 / FGSC 9075 / NRRL 31084 / PH-1) (Wheat head blight fungus).